Consider the following 120-residue polypeptide: Jacalin-related lectin 39 (120 aa).

In terms of domain architecture, Jacalin-type lectin spans 6 to 120; it reads SRDHADFVAH…KRTFDFGGFN (115 aa).

This sequence belongs to the jacalin lectin family.

The chain is Jacalin-related lectin 39 (JAL39) from Arabidopsis thaliana (Mouse-ear cress).